The chain runs to 262 residues: Hydroxyethylthiazole kinase (262 aa).

Met50 is a binding site for substrate. ATP-binding residues include Arg125 and Thr171. Gly198 contributes to the substrate binding site.

This sequence belongs to the Thz kinase family. It depends on Mg(2+) as a cofactor.

The enzyme catalyses 5-(2-hydroxyethyl)-4-methylthiazole + ATP = 4-methyl-5-(2-phosphooxyethyl)-thiazole + ADP + H(+). Its pathway is cofactor biosynthesis; thiamine diphosphate biosynthesis; 4-methyl-5-(2-phosphoethyl)-thiazole from 5-(2-hydroxyethyl)-4-methylthiazole: step 1/1. Catalyzes the phosphorylation of the hydroxyl group of 4-methyl-5-beta-hydroxyethylthiazole (THZ). The polypeptide is Hydroxyethylthiazole kinase (Escherichia coli O139:H28 (strain E24377A / ETEC)).